The following is a 559-amino-acid chain: Tissue-type plasminogen activator (559 aa).

The N-terminal stretch at 1 to 17 (MKRELLCVLLLCGLAFP) is a signal peptide. Positions 18–29 (LPDQGIHGRFRR) are excised as a propeptide. The propeptide at 30–32 (GAR) is removed by plasmin. Positions 36–78 (ATCRDEPTQTTYQQHQSWLRPMLRSSRVEYCRCNSGLVQCHSV) constitute a Fibronectin type-I domain. Cystine bridges form between Cys38/Cys68, Cys66/Cys75, Cys83/Cys94, Cys88/Cys105, Cys107/Cys116, Cys124/Cys205, Cys145/Cys187, Cys176/Cys200, Cys213/Cys294, Cys234/Cys276, Cys265/Cys289, Cys297/Cys428, Cys340/Cys356, Cys348/Cys417, Cys442/Cys516, Cys474/Cys490, and Cys506/Cys534. The interval 39 to 49 (RDEPTQTTYQQ) is important for binding to annexin A2. In terms of domain architecture, EGF-like spans 79–117 (PVRSCSEPRCFNGGTCQQALYFSDFVCQCPDGFVGKRCD). Kringle domains lie at 124–205 (CFEE…TPAC) and 213–294 (CYVG…MSPC). Asn149 carries an N-linked (GlcNAc...) asparagine glycan. The region spanning 309-558 (IKGGLYTDIT…YLDWIHDNMK (250 aa)) is the Peptidase S1 domain. Catalysis depends on charge relay system residues His355 and Asp404. Residue Asn481 is glycosylated (N-linked (GlcNAc...) asparagine). The active-site Charge relay system is the Ser510.

The protein belongs to the peptidase S1 family. As to quaternary structure, heterodimer of chain A and chain B held by a disulfide bond. Binds to fibrin with high affinity. This interaction leads to an increase in the catalytic efficiency of the enzyme due to an increase in affinity for plasminogen. Similarly, binding to heparin increases the activation of plasminogen. Binds to annexin A2, cytokeratin-8, fibronectin and laminin. Binds to mannose receptor and the low-density lipoprotein receptor-related protein (LRP1); these proteins are involved in TPA clearance. Binds LRP1B; binding is followed by internalization and degradation. Forms heterodimer with SERPINA5. Interacts with SERPINE1. In complex with SERPINE1, interacts with SORL1. Post-translationally, the single chain, almost fully active enzyme, can be further processed into a two-chain fully active form by a cleavage after Arg-308 catalyzed by plasmin, tissue kallikrein or factor Xa.

Its subcellular location is the secreted. The protein localises to the extracellular space. The enzyme catalyses Specific cleavage of Arg-|-Val bond in plasminogen to form plasmin.. Its activity is regulated as follows. Inhibited by SERPINA5. Inhibited by SERPINE1. In terms of biological role, converts the abundant, but inactive, zymogen plasminogen to plasmin by hydrolyzing a single Arg-Val bond in plasminogen. By controlling plasmin-mediated proteolysis, it plays an important role in tissue remodeling and degradation, in cell migration and many other physiopathological events. During oocyte activation, plays a role in cortical granule reaction in the zona reaction, which contributes to the block to polyspermy. The protein is Tissue-type plasminogen activator (Plat) of Mus musculus (Mouse).